We begin with the raw amino-acid sequence, 284 residues long: MDAIKKKMQAMKIEKENALDKSEQLENKLKEIEDVKVKIEEDLTSLQKKYTNQENEYDKVNEQFNESTVKLEASEKRVTECEDEIKGFTRRIQLLEDELERTQQKAEEAVLKLEEASKAADESERGRKVLESRSIADDDRIDKLEKDVKDSKYLAEEADRKYDEAARKLAITEVDLERAETRLEAAESKITELSEELQVVGNNCKALQNAVDQASQREDSYEETIRDLTQRLKDAENRAAEAERVVNKLQKEVDRLEDELLQEKEKYKQISDELDQTFAELAGM.

A coiled-coil region spans residues 1 to 280; the sequence is MDAIKKKMQA…SDELDQTFAE (280 aa).

This sequence belongs to the tropomyosin family. As to quaternary structure, homodimer.

Its function is as follows. Tropomyosin, in association with the troponin complex, plays a central role in the calcium dependent regulation of muscle contraction. This chain is Tropomyosin, found in Sinonovacula constricta (Razor clam).